The following is a 746-amino-acid chain: Protein C-mannosyl-transferase DPY19L1 (746 aa).

Residues 1-68 are disordered; it reads MVLQARSKHR…RAETAAPAPD (68 aa). Residues 14–27 show a composition bias toward pro residues; sequence PRPPRPARSSPPPL. 12 consecutive transmembrane segments (helical) span residues 93-113, 139-159, 227-247, 248-268, 308-328, 329-349, 357-377, 378-398, 405-425, 481-501, 520-540, and 562-582; these read STLL…TQLF, YSYF…WMIM, ACFY…LFFI, YGTY…CFFF, YRGS…PWQF, AQFV…VGYI, IIYT…GNSM, LLTS…AMKP, VSEL…TVTL, LLLP…INDM, GELV…ILIM, and LFGW…VLAA.

Belongs to the dpy-19 family.

The protein resides in the endoplasmic reticulum membrane. It carries out the reaction L-tryptophyl-[protein] + a di-trans,poly-cis-dolichyl beta-D-mannosyl phosphate = C-alpha-D-mannosyl-L-tryptophyl-[protein] + a di-trans,poly-cis-dolichyl phosphate + H(+). It participates in protein modification; protein glycosylation. Functionally, C-mannosyltransferase that mediates the C-mannosylation tryptophan residues on target proteins. The reaction occurs on the luminal side of the endoplasmic reticulum and involves the transfer of a mannose unit from a dolichylphosphate mannose (Dol-P-Man) donor to an acceptor protein containing a WxxW consensus sequence. C-mannosylates the first two tryptophans in the WxxWxxWxxC sequence motif in thrombospondin (TSP) type-1 repeats of UNC5A. Regulates neurite extension during development. The chain is Protein C-mannosyl-transferase DPY19L1 (Dpy19l1) from Rattus norvegicus (Rat).